We begin with the raw amino-acid sequence, 174 residues long: uncharacterized protein (174 aa).

The chain crosses the membrane as a helical span at residues Leu-7–Ile-27.

The protein localises to the membrane. This is an uncharacterized protein from Rickettsia prowazekii (strain Madrid E).